A 353-amino-acid chain; its full sequence is tRNA-specific 2-thiouridylase MnmA (353 aa).

ATP contacts are provided by residues 6-13 (GMSGGVDS) and L32. The active-site Nucleophile is C99. Residues C99 and C197 are joined by a disulfide bond. G124 serves as a coordination point for ATP. Positions 147-149 (KDQ) are interaction with tRNA. The active-site Cysteine persulfide intermediate is the C197. Positions 303–304 (RY) are interaction with tRNA.

The protein belongs to the MnmA/TRMU family.

It is found in the cytoplasm. The catalysed reaction is S-sulfanyl-L-cysteinyl-[protein] + uridine(34) in tRNA + AH2 + ATP = 2-thiouridine(34) in tRNA + L-cysteinyl-[protein] + A + AMP + diphosphate + H(+). Functionally, catalyzes the 2-thiolation of uridine at the wobble position (U34) of tRNA, leading to the formation of s(2)U34. The protein is tRNA-specific 2-thiouridylase MnmA of Persephonella marina (strain DSM 14350 / EX-H1).